The following is a 428-amino-acid chain: Adenylosuccinate synthetase (428 aa).

GTP-binding positions include 12–18 (GDEGKGK) and 40–42 (GHT). The Proton acceptor role is filled by D13. Residues D13 and G40 each coordinate Mg(2+). IMP-binding positions include 13 to 16 (DEGK), 38 to 41 (NAGH), T128, R142, Q223, T238, and R302. H41 serves as the catalytic Proton donor. 298-304 (TTTGRPR) is a substrate binding site. GTP contacts are provided by residues R304, 330–332 (KLD), and 412–414 (GVG).

This sequence belongs to the adenylosuccinate synthetase family. As to quaternary structure, homodimer. Requires Mg(2+) as cofactor.

Its subcellular location is the cytoplasm. The catalysed reaction is IMP + L-aspartate + GTP = N(6)-(1,2-dicarboxyethyl)-AMP + GDP + phosphate + 2 H(+). It functions in the pathway purine metabolism; AMP biosynthesis via de novo pathway; AMP from IMP: step 1/2. Plays an important role in the de novo pathway of purine nucleotide biosynthesis. Catalyzes the first committed step in the biosynthesis of AMP from IMP. In Kineococcus radiotolerans (strain ATCC BAA-149 / DSM 14245 / SRS30216), this protein is Adenylosuccinate synthetase.